Reading from the N-terminus, the 492-residue chain is GTPase Der (492 aa).

EngA-type G domains follow at residues 3–167 (FTLA…EKFE) and 207–382 (LQVA…DVWN). GTP-binding positions include 9-16 (GRPNVGKS), 56-60 (DSAGL), 119-122 (NKSE), 213-220 (GRPNAGKS), 260-264 (DTAGM), and 325-328 (NKWD). Residues 383-469 (RRVPTAALNR…RLTLRGQGDK (87 aa)) form the KH-like domain. Residues 461–492 (LTLRGQGDKNPYKGKKKSTPSRLRKHLEGRKS) are disordered. Residues 472–492 (YKGKKKSTPSRLRKHLEGRKS) are compositionally biased toward basic residues.

It belongs to the TRAFAC class TrmE-Era-EngA-EngB-Septin-like GTPase superfamily. EngA (Der) GTPase family. As to quaternary structure, associates with the 50S ribosomal subunit.

In terms of biological role, GTPase that plays an essential role in the late steps of ribosome biogenesis. The protein is GTPase Der of Ruegeria sp. (strain TM1040) (Silicibacter sp.).